Consider the following 356-residue polypeptide: Na(+)/H(+) exchange regulatory cofactor NHE-RF1 (356 aa).

Ser-2 is modified (N-acetylserine). Phosphoserine is present on residues Ser-2 and Ser-46. Residues 14 to 94 form the PDZ 1 domain; sequence LCCLEKGPNG…AVRLLVVDPE (81 aa). The segment at 113–142 is disordered; that stretch reads AQEKSEHTEPPAAADTKKAGDQNEAEKSHL. One can recognise a PDZ 2 domain in the interval 151-231; sequence LCTMKKGPNG…EAKLLVVDKE (81 aa). Residues 265-356 form a disordered region; the sequence is NSREALVEPA…SKKNELFSNL (92 aa). 4 positions are modified to phosphoserine: Ser-266, Ser-277, Ser-287, and Ser-288. Residues 272 to 288 are compositionally biased toward low complexity; that stretch reads EPASESPRPALARSASS. Phosphothreonine is present on Thr-290. Ser-291 and Ser-299 each carry phosphoserine. A compositionally biased stretch (low complexity) spans 307–317; sequence EPSSTSSSSDP. A compositionally biased stretch (basic and acidic residues) spans 346-356; the sequence is WSKKNELFSNL.

As to quaternary structure, homodimer, and heterodimer with NHERF2. Binds the N-termini of EZR, RDX and MSN. Binds the C-termini of PDGFRA, PDGFRB, ADRB2, NOS2 and CFTR. Binds ARHGAP17, EPI64, RACK1, OPRK1, GNAQ, CTNNB1 and PLCB3. Binds PDZK1. Interacts with CLCN3. Binds the C-terminus of PAG1. In resting T-cells, part of a PAG1-NHERF1-MSN complex which is disrupted upon TCR activation. Forms a complex with CFTR and SLC4A7. Forms a complex with SLC4A7 and ATP6V1B1. Interacts with TRPC4 (via the PDZ-binding domain). Directly interacts with HTR4. Interacts (via the PDZ 1 domain) with PODXL (via the C-terminal PDZ-binding motif DTHL); interaction is not detected in glomerular epithelium cells. Interacts (via the PDZ 1 domain) with PODXL (via the C-terminal PDZ-binding motif DTHL); the interaction take place early in the secretory pathway and is necessary for its apical membrane sorting. Interacts with SLC26A3. Interacts with MCC. Interacts with SLC34A1. Interacts (via the PDZ domains) with SLC26A6 isoform 4 and isoform 5. Interacts (via PDZ domains) with ACE2 (via PDZ-binding motif); the interaction may enhance ACE2 membrane residence.

It localises to the cytoplasm. It is found in the apical cell membrane. The protein localises to the cell projection. The protein resides in the filopodium. Its subcellular location is the ruffle. It localises to the microvillus. It is found in the endomembrane system. In terms of biological role, scaffold protein that connects plasma membrane proteins with members of the ezrin/moesin/radixin family and thereby helps to link them to the actin cytoskeleton and to regulate their surface expression. Necessary for recycling of internalized ADRB2. Was first known to play a role in the regulation of the activity and subcellular location of SLC9A3. Necessary for cAMP-mediated phosphorylation and inhibition of SLC9A3. Involved in sperm capacitation. May participate in the regulation of the chloride and bicarbonate homeostasis in spermatozoa. May enhance Wnt signaling. May participate in HTR4 targeting to microvilli. Involved in the regulation of phosphate reabsorption in the renal proximal tubules. The sequence is that of Na(+)/H(+) exchange regulatory cofactor NHE-RF1 (Nherf1) from Rattus norvegicus (Rat).